The sequence spans 204 residues: DNA-directed RNA polymerase III subunit RPC8 (204 aa).

Positions 158-178 (VDTSPTGPSSAEAASSSEELP) are disordered. The segment covering 166 to 175 (SSAEAASSSE) has biased composition (low complexity).

The protein belongs to the eukaryotic RPB7/RPC8 RNA polymerase subunit family. In terms of assembly, component of the RNA polymerase III complex consisting of 17 subunits: a ten-subunit horseshoe-shaped catalytic core composed of POLR3A/RPC1, POLR3B/RPC2, POLR1C/RPAC1, POLR1D/RPAC2, POLR3K/RPC10, POLR2E/RPABC1, POLR2F/RPABC2, POLR2H/RPABC3, POLR2K/RPABC4 and POLR2L/RPABC5; a mobile stalk composed of two subunits POLR3H/RPC8 and CRCP/RPC9, protruding from the core and functioning primarily in transcription initiation; and additional subunits homologous to general transcription factors of the RNA polymerase II machinery, POLR3C/RPC3-POLR3F/RPC6-POLR3G/RPC7 heterotrimer required for transcription initiation and POLR3D/RPC4-POLR3E/RPC5 heterodimer involved in both transcription initiation and termination. Interacts with CRCP/RPC9. POLR3H/RPC8 and CRCP/RPC9 probably form a Pol III subcomplex.

It localises to the nucleus. Functionally, DNA-dependent RNA polymerase catalyzes the transcription of DNA into RNA using the four ribonucleoside triphosphates as substrates. Specific peripheric component of RNA polymerase III (Pol III) which synthesizes small non-coding RNAs including 5S rRNA, snRNAs, tRNAs and miRNAs from at least 500 distinct genomic loci. With CRCP/RPC9 forms a mobile stalk that protrudes from Pol III core and functions primarily in transcription initiation. Pol III plays a key role in sensing and limiting infection by intracellular bacteria and DNA viruses. Acts as nuclear and cytosolic DNA sensor involved in innate immune response. Can sense non-self dsDNA that serves as template for transcription into dsRNA. The non-self RNA polymerase III transcripts, such as Epstein-Barr virus-encoded RNAs (EBERs) induce type I interferon and NF-kappa-B through the RIG-I pathway. In Bos taurus (Bovine), this protein is DNA-directed RNA polymerase III subunit RPC8 (POLR3H).